Consider the following 275-residue polypeptide: Large ribosomal subunit protein uL2c (275 aa).

Positions 225–259 (KNPVDHPHGGGEGRAPIGRSTPVTPWGKPALGRRT) are disordered.

The protein belongs to the universal ribosomal protein uL2 family. As to quaternary structure, part of the 50S ribosomal subunit.

It is found in the plastid. Its subcellular location is the cyanelle. This Cyanophora paradoxa protein is Large ribosomal subunit protein uL2c (rpl2).